Here is a 235-residue protein sequence, read N- to C-terminus: Aspartate/glutamate leucyltransferase (235 aa).

This sequence belongs to the R-transferase family. Bpt subfamily.

The protein resides in the cytoplasm. The catalysed reaction is N-terminal L-glutamyl-[protein] + L-leucyl-tRNA(Leu) = N-terminal L-leucyl-L-glutamyl-[protein] + tRNA(Leu) + H(+). It carries out the reaction N-terminal L-aspartyl-[protein] + L-leucyl-tRNA(Leu) = N-terminal L-leucyl-L-aspartyl-[protein] + tRNA(Leu) + H(+). Functions in the N-end rule pathway of protein degradation where it conjugates Leu from its aminoacyl-tRNA to the N-termini of proteins containing an N-terminal aspartate or glutamate. This chain is Aspartate/glutamate leucyltransferase, found in Pseudomonas putida (strain ATCC 47054 / DSM 6125 / CFBP 8728 / NCIMB 11950 / KT2440).